The primary structure comprises 891 residues: DNA mismatch repair protein MutS (891 aa).

Residue 634 to 641 coordinates ATP; the sequence is GPNMGGKS.

Belongs to the DNA mismatch repair MutS family.

Functionally, this protein is involved in the repair of mismatches in DNA. It is possible that it carries out the mismatch recognition step. This protein has a weak ATPase activity. The polypeptide is DNA mismatch repair protein MutS (Burkholderia mallei (strain NCTC 10247)).